A 367-amino-acid polypeptide reads, in one-letter code: Dual specificity protein phosphatase 1 (367 aa).

Residues 20-137 enclose the Rhodanese domain; it reads RAAQCLLLDC…FSASCPELCS (118 aa). In terms of domain architecture, Tyrosine-protein phosphatase spans 173–314; that stretch reads GPVEILSFLY…LLQFESQVLA (142 aa). The active-site Phosphocysteine intermediate is Cys258. 2 positions are modified to phosphoserine; by MAPK1 and MAPK3: Ser359 and Ser364.

Belongs to the protein-tyrosine phosphatase family. Non-receptor class dual specificity subfamily. Phosphorylation at Ser-359 and Ser-364 by MAPK1/ERK2 and MAPK3/ERK1 reduces its rate of degradation. In terms of processing, 'Lys-48'-linked polyubiquitinated by NEURL3, leading to proteasomal degradation. As to expression, brain. High level expression seen in the cingulate gyrus within the retrospinal cortex, ventral and medial divisions of the anterior thalamus and the medial geniculate nucleus. Expressed at moderate levels in the parietal and temporal cortex. Expressed in the cerebellum.

The protein localises to the nucleus. The catalysed reaction is O-phospho-L-tyrosyl-[protein] + H2O = L-tyrosyl-[protein] + phosphate. It carries out the reaction O-phospho-L-seryl-[protein] + H2O = L-seryl-[protein] + phosphate. It catalyses the reaction O-phospho-L-threonyl-[protein] + H2O = L-threonyl-[protein] + phosphate. Dual specificity phosphatase that dephosphorylates MAP kinase MAPK1/ERK2 on both 'Thr-183' and 'Tyr-185', regulating its activity during the meiotic cell cycle. In Rattus norvegicus (Rat), this protein is Dual specificity protein phosphatase 1.